A 358-amino-acid polypeptide reads, in one-letter code: MNRGMKPINELISPDTKHYSFTEPFQTELGATLPSVEVAYRTWGTLNEARDNVILICHALTGSADADQWWGGLFGEGCGFDATRDFIICSNVLGSCYGTTGPLSPNPATGRHYGPDFPLITIRDMVHVERHLLRHLGIERVKLVVGASLGGMQVLEWGALYPEVALALMPMGISGRHSAWCIAQSEAQRQAIMADALWKDGWYEEDAPPARGLGAARMMAMCTYRSFRNFEEKFGRQRQEDGTFKAVSYMHHQGGRLVERFDANTYITLTRAMDMHDLGRGRSGYEEAVCAMTQPVEILSIDSDVLYPKSEQQELACLLPNSKILYLDEPYGHDAFLIDVERVSRMVRDFLQAISRKG.

Residues asparagine 52–leucine 337 enclose the AB hydrolase-1 domain. Serine 148 serves as the catalytic Nucleophile. Position 217 (arginine 217) interacts with substrate. Catalysis depends on residues aspartate 304 and histidine 333. Residue aspartate 334 participates in substrate binding.

It belongs to the AB hydrolase superfamily. MetX family. Homodimer.

It is found in the cytoplasm. It carries out the reaction L-homoserine + acetyl-CoA = O-acetyl-L-homoserine + CoA. Its pathway is amino-acid biosynthesis; L-methionine biosynthesis via de novo pathway; O-acetyl-L-homoserine from L-homoserine: step 1/1. Functionally, transfers an acetyl group from acetyl-CoA to L-homoserine, forming acetyl-L-homoserine. This Chlorobium luteolum (strain DSM 273 / BCRC 81028 / 2530) (Pelodictyon luteolum) protein is Homoserine O-acetyltransferase.